The sequence spans 240 residues: ATP-dependent dethiobiotin synthetase BioD (240 aa).

Gly-13 to Ile-18 contributes to the ATP binding site. Thr-17 contributes to the Mg(2+) binding site. Lys-38 is an active-site residue. Thr-42 lines the substrate pocket. ATP-binding positions include Asp-55, Glu-116 to Gly-119, and Pro-214 to Leu-216. Asp-55 and Glu-116 together coordinate Mg(2+).

The protein belongs to the dethiobiotin synthetase family. In terms of assembly, homodimer. Requires Mg(2+) as cofactor.

It localises to the cytoplasm. It catalyses the reaction (7R,8S)-7,8-diammoniononanoate + CO2 + ATP = (4R,5S)-dethiobiotin + ADP + phosphate + 3 H(+). The protein operates within cofactor biosynthesis; biotin biosynthesis; biotin from 7,8-diaminononanoate: step 1/2. Functionally, catalyzes a mechanistically unusual reaction, the ATP-dependent insertion of CO2 between the N7 and N8 nitrogen atoms of 7,8-diaminopelargonic acid (DAPA, also called 7,8-diammoniononanoate) to form a ureido ring. This is ATP-dependent dethiobiotin synthetase BioD from Thermodesulfovibrio yellowstonii (strain ATCC 51303 / DSM 11347 / YP87).